The sequence spans 590 residues: MGRARPGQRGPPSPGPAAQPPAPPRRRARSLALLGALLAAAAAAAVRVCARHAEAQAAARQELALKTLGTDGLFLFSSLDTDGDMYISPEEFKPIAEKLTGSCSVTQTGVQWCSHSSLQPQLPWLNUSSCLSLLRSTPAASCEEEELPPDPSEETLTIEARFQPLLPETMTKSKDGFLGVSRLALSGLRNWTAAASPSAVFATRHFQPFLPPPGQELGEPWWIIPSELSMFTGYLSNNRFYPPPPKGKEVIIHRLLSMFHPRPFVKTRFAPQGAVACLTAISDFYYTVMFRIHAEFQLSEPPDFPFWFSPAQFTGHIILSKDATHVRDFRLFVPNHRSLNVDMEWLYGASESSNMEVDIGYIPQMELEATGPSVPSVILDEDGSMIDSHLPSGEPLQFVFEEIKWQQELSWEEAARRLEVAMYPFKKVSYLPFTEAFDRAKAENKLVHSILLWGALDDQSCUGSGRTLRETVLESSPILTLLNESFISTWSLVKELEELQNNQENSSHQKLAGLHLEKYSFPVEMMICLPNGTVVHHINANYFLDITSVKPEEIESNLFSFSSTFEDPSTATYMQFLKEGLRRGLPLLQP.

Residues 1–26 form a disordered region; it reads MGRARPGQRGPPSPGPAAQPPAPPRR. The first 43 residues, 1 to 43, serve as a signal peptide directing secretion; it reads MGRARPGQRGPPSPGPAAQPPAPPRRRARSLALLGALLAAAAA. Pro residues predominate over residues 9–23; sequence RGPPSPGPAAQPPAP. The EF-hand domain maps to 67 to 102; it reads TLGTDGLFLFSSLDTDGDMYISPEEFKPIAEKLTGS. Residue Asn126 is glycosylated (N-linked (GlcNAc...) asparagine). Residue Sec127 is a non-standard amino acid, selenocysteine. N-linked (GlcNAc...) asparagine glycosylation is present at Asn190. A non-standard amino acid (selenocysteine) is located at residue Sec462. Residues Asn483, Asn505, and Asn531 are each glycosylated (N-linked (GlcNAc...) asparagine).

In terms of assembly, interacts with RYR1, RYR2 and RYR3. Post-translationally, N-glycosylated. As to expression, isoform 1 and isoform 2 are expressed in skeletal muscle, brain, lung and placenta. Isoform 2 is also expressed in heart, diaphragm and stomach.

Its subcellular location is the endoplasmic reticulum membrane. Functionally, plays an important role in cell protection against oxidative stress and in the regulation of redox-related calcium homeostasis. Regulates the calcium level of the ER by protecting the calcium pump ATP2A2 against the oxidoreductase ERO1A-mediated oxidative damage. Within the ER, ERO1A activity increases the concentration of H(2)O(2), which attacks the luminal thiols in ATP2A2 and thus leads to cysteinyl sulfenic acid formation (-SOH) and SEPN1 reduces the SOH back to free thiol (-SH), thus restoring ATP2A2 activity. Acts as a modulator of ryanodine receptor (RyR) activity: protects RyR from oxidation due to increased oxidative stress, or directly controls the RyR redox state, regulating the RyR-mediated calcium mobilization required for normal muscle development and differentiation. Essential for muscle regeneration and satellite cell maintenance in skeletal muscle. This chain is Selenoprotein N, found in Homo sapiens (Human).